The chain runs to 474 residues: tRNA (guanine(37)-N(1))-methyltransferase (474 aa).

S-adenosyl-L-methionine-binding positions include histidine 234, 274–275 (DL), 303–304 (DA), and asparagine 345. Over residues 452–464 (EPEAQCESEEAEE) the composition is skewed to acidic residues. The interval 452–474 (EPEAQCESEEAEEPSSKRIKVDT) is disordered. Positions 465-474 (PSSKRIKVDT) are enriched in basic and acidic residues.

This sequence belongs to the class I-like SAM-binding methyltransferase superfamily. TRM5/TYW2 family. As to quaternary structure, monomer.

The protein localises to the mitochondrion matrix. Its subcellular location is the nucleus. The protein resides in the cytoplasm. The enzyme catalyses guanosine(37) in tRNA + S-adenosyl-L-methionine = N(1)-methylguanosine(37) in tRNA + S-adenosyl-L-homocysteine + H(+). Functionally, specifically methylates the N1 position of guanosine-37 in various cytoplasmic and mitochondrial tRNAs. Methylation is not dependent on the nature of the nucleoside 5' of the target nucleoside. This is the first step in the biosynthesis of wybutosine (yW), a modified base adjacent to the anticodon of tRNAs and required for accurate decoding. In Caenorhabditis elegans, this protein is tRNA (guanine(37)-N(1))-methyltransferase.